We begin with the raw amino-acid sequence, 108 residues long: MTNQILITTTESIPGKHYEVLGEVFGLTTQSKNVFKNIGASLKNVVGGEIRAYTEMMTESRDVAIDRLRQNAIEMGADAVVMMRFDSGSIGTDMQSVAAYGTAVKYID.

This sequence belongs to the UPF0145 family.

This is UPF0145 protein LCA_1282 from Latilactobacillus sakei subsp. sakei (strain 23K) (Lactobacillus sakei subsp. sakei).